The sequence spans 381 residues: Probable tRNA sulfurtransferase (381 aa).

One can recognise a THUMP domain in the interval 60-168; that stretch reads REATEVLTRV…EGKAYIFVDK (109 aa). Residues 186-187, K269, G291, and Q300 contribute to the ATP site; that span reads LL.

Belongs to the ThiI family.

It is found in the cytoplasm. The enzyme catalyses [ThiI sulfur-carrier protein]-S-sulfanyl-L-cysteine + a uridine in tRNA + 2 reduced [2Fe-2S]-[ferredoxin] + ATP + H(+) = [ThiI sulfur-carrier protein]-L-cysteine + a 4-thiouridine in tRNA + 2 oxidized [2Fe-2S]-[ferredoxin] + AMP + diphosphate. The catalysed reaction is [ThiS sulfur-carrier protein]-C-terminal Gly-Gly-AMP + S-sulfanyl-L-cysteinyl-[cysteine desulfurase] + AH2 = [ThiS sulfur-carrier protein]-C-terminal-Gly-aminoethanethioate + L-cysteinyl-[cysteine desulfurase] + A + AMP + 2 H(+). Its pathway is cofactor biosynthesis; thiamine diphosphate biosynthesis. Functionally, catalyzes the ATP-dependent transfer of a sulfur to tRNA to produce 4-thiouridine in position 8 of tRNAs, which functions as a near-UV photosensor. Also catalyzes the transfer of sulfur to the sulfur carrier protein ThiS, forming ThiS-thiocarboxylate. This is a step in the synthesis of thiazole, in the thiamine biosynthesis pathway. The sulfur is donated as persulfide by IscS. The sequence is that of Probable tRNA sulfurtransferase from Thermococcus kodakarensis (strain ATCC BAA-918 / JCM 12380 / KOD1) (Pyrococcus kodakaraensis (strain KOD1)).